We begin with the raw amino-acid sequence, 321 residues long: Glucokinase (321 aa).

8 to 13 (GDVGGT) contacts ATP.

It belongs to the bacterial glucokinase family.

The protein localises to the cytoplasm. It carries out the reaction D-glucose + ATP = D-glucose 6-phosphate + ADP + H(+). This Cronobacter sakazakii (strain ATCC BAA-894) (Enterobacter sakazakii) protein is Glucokinase.